The sequence spans 497 residues: Glycerol kinase (497 aa).

T13 is a binding site for ADP. T13, T14, and S15 together coordinate ATP. T13 is a binding site for sn-glycerol 3-phosphate. ADP is bound at residue R17. Sn-glycerol 3-phosphate contacts are provided by R83, E84, and Y135. The glycerol site is built by R83, E84, and Y135. The residue at position 231 (H231) is a Phosphohistidine; by HPr. D245 is a binding site for sn-glycerol 3-phosphate. Glycerol contacts are provided by D245 and Q246. Residues T267 and G310 each coordinate ADP. ATP contacts are provided by T267, G310, Q314, and G411. G411 and N415 together coordinate ADP.

It belongs to the FGGY kinase family. As to quaternary structure, homotetramer and homodimer (in equilibrium). In terms of processing, the phosphoenolpyruvate-dependent sugar phosphotransferase system (PTS), including enzyme I, and histidine-containing protein (HPr) are required for the phosphorylation, which leads to the activation of the enzyme.

It catalyses the reaction glycerol + ATP = sn-glycerol 3-phosphate + ADP + H(+). Its pathway is polyol metabolism; glycerol degradation via glycerol kinase pathway; sn-glycerol 3-phosphate from glycerol: step 1/1. With respect to regulation, activated by phosphorylation and inhibited by fructose 1,6-bisphosphate (FBP). Key enzyme in the regulation of glycerol uptake and metabolism. Catalyzes the phosphorylation of glycerol to yield sn-glycerol 3-phosphate. The chain is Glycerol kinase from Listeria monocytogenes serotype 4b (strain F2365).